A 271-amino-acid polypeptide reads, in one-letter code: Bifunctional protein FolD (271 aa).

Residues 154-156 (GRS), T181, and I222 contribute to the NADP(+) site.

It belongs to the tetrahydrofolate dehydrogenase/cyclohydrolase family. Homodimer.

It catalyses the reaction (6R)-5,10-methylene-5,6,7,8-tetrahydrofolate + NADP(+) = (6R)-5,10-methenyltetrahydrofolate + NADPH. It carries out the reaction (6R)-5,10-methenyltetrahydrofolate + H2O = (6R)-10-formyltetrahydrofolate + H(+). It participates in one-carbon metabolism; tetrahydrofolate interconversion. In terms of biological role, catalyzes the oxidation of 5,10-methylenetetrahydrofolate to 5,10-methenyltetrahydrofolate and then the hydrolysis of 5,10-methenyltetrahydrofolate to 10-formyltetrahydrofolate. The polypeptide is Bifunctional protein FolD (Thermosipho melanesiensis (strain DSM 12029 / CIP 104789 / BI429)).